The primary structure comprises 329 residues: Anthranilate phosphoribosyltransferase (329 aa).

5-phospho-alpha-D-ribose 1-diphosphate is bound by residues Gly78, 81-82, 88-91, 106-114, and Ser118; these read GD, NLST, and KHGNRAASS. An anthranilate-binding site is contributed by Gly78. Ser90 lines the Mg(2+) pocket. Anthranilate is bound at residue Asn109. Arg164 contributes to the anthranilate binding site. Mg(2+)-binding residues include Asp221 and Glu222.

It belongs to the anthranilate phosphoribosyltransferase family. As to quaternary structure, homodimer. Requires Mg(2+) as cofactor.

It carries out the reaction N-(5-phospho-beta-D-ribosyl)anthranilate + diphosphate = 5-phospho-alpha-D-ribose 1-diphosphate + anthranilate. It functions in the pathway amino-acid biosynthesis; L-tryptophan biosynthesis; L-tryptophan from chorismate: step 2/5. In terms of biological role, catalyzes the transfer of the phosphoribosyl group of 5-phosphorylribose-1-pyrophosphate (PRPP) to anthranilate to yield N-(5'-phosphoribosyl)-anthranilate (PRA). This chain is Anthranilate phosphoribosyltransferase, found in Thermus thermophilus (strain ATCC BAA-163 / DSM 7039 / HB27).